A 96-amino-acid chain; its full sequence is UPF0298 protein LCA_1075 (96 aa).

Belongs to the UPF0298 family.

The protein resides in the cytoplasm. This chain is UPF0298 protein LCA_1075, found in Latilactobacillus sakei subsp. sakei (strain 23K) (Lactobacillus sakei subsp. sakei).